Consider the following 767-residue polypeptide: Two-component response regulator-like PRR73 (767 aa).

Positions Met1–Glu64 are disordered. Residues Arg82 to Trp200 form the Response regulatory domain. Over residues Ser205–Gly214 the composition is skewed to low complexity. Disordered regions lie at residues Ser205 to Trp272, Arg312 to Thr388, Ala476 to Val546, Ala646 to Gly701, and Asn727 to Arg767. Residues Asp238–Leu252 are compositionally biased toward acidic residues. Polar residues-rich tracts occupy residues Asp263–Trp272, Arg343–Thr361, and Cys488–Ala497. Residues Gly518–Ser531 show a composition bias toward low complexity. Residues Thr532–Arg543 are compositionally biased toward polar residues. Over residues Gly689 to Ser700 the composition is skewed to gly residues. Residues Arg712–Gln754 form the CCT domain. The span at Asn727–Lys738 shows a compositional bias: basic residues.

This sequence belongs to the ARR-like family.

It localises to the nucleus. Functionally, controls photoperiodic flowering response. Seems to be one of the component of the circadian clock. Expression of several members of the ARR-like family is controlled by circadian rhythm. The particular coordinated sequential expression of PRR73, PRR37, PRR95, PRR59 and PPR1 result to circadian waves that may be at the basis of the endogenous circadian clock. The chain is Two-component response regulator-like PRR73 (PRR73) from Oryza sativa subsp. japonica (Rice).